The chain runs to 390 residues: Aspartate beta-hydroxylase domain-containing protein 1 (390 aa).

A disordered region spans residues 1–54 (MKEGRGSFSVERGPRKERETAQSGMWKGNSPAGSQGAAMEGTGGELGGQGNWGP). The Cytoplasmic portion of the chain corresponds to 1-72 (MKEGRGSFSV…RASLIMLPWP (72 aa)). Over residues 41–51 (GTGGELGGQGN) the composition is skewed to gly residues. A helical transmembrane segment spans residues 73–95 (LPLASSALTLLFGALTSLFLWYC). Residues 96–390 (YRLGSQDMQA…ALDFVFAPDP (295 aa)) are Lumenal-facing. Positions 116-143 (RGGPVGCSEAGGPSPGGPGDPGEGPRTE) are disordered. A compositionally biased stretch (gly residues) spans 128–137 (PSPGGPGDPG). A Phosphoserine modification is found at Ser-129.

It belongs to the aspartyl/asparaginyl beta-hydroxylase family.

The protein resides in the membrane. The polypeptide is Aspartate beta-hydroxylase domain-containing protein 1 (ASPHD1) (Homo sapiens (Human)).